The primary structure comprises 560 residues: Serine/threonine-protein kinase TOS3 (560 aa).

A Protein kinase domain is found at 50–344 (FEILATLGNG…LADIKVHPFM (295 aa)). ATP is bound by residues 56–64 (LGNGQYGKV) and K79. D189 acts as the Proton acceptor in catalysis.

Belongs to the protein kinase superfamily. Ser/Thr protein kinase family. Post-translationally, autophosphorylated.

It carries out the reaction L-seryl-[protein] + ATP = O-phospho-L-seryl-[protein] + ADP + H(+). The catalysed reaction is L-threonyl-[protein] + ATP = O-phospho-L-threonyl-[protein] + ADP + H(+). In terms of biological role, one of the three SNF1 protein kinases (with SAK1 and ELM1) which are required for growth on nonfermentable carbon sources and nonpreferred sugars and for response to environmental stress. Activates SNF1 by phosphorylation of its activation-loop 'Thr-210'. Required for the regulation by SNF1 of the transcription of a large set of genes, the modification the activity of metabolic enzymes, and the control of various nutrient-responsive cellular developmental processes. Also phosphorylates GAL83, MIG1 and SIP2. The protein is Serine/threonine-protein kinase TOS3 (TOS3) of Saccharomyces cerevisiae (strain YJM789) (Baker's yeast).